The chain runs to 359 residues: Serine/threonine-protein phosphatase 2A activator 2 (359 aa).

Belongs to the PTPA-type PPIase family.

It is found in the cytoplasm. The catalysed reaction is [protein]-peptidylproline (omega=180) = [protein]-peptidylproline (omega=0). PPIases accelerate the folding of proteins. It catalyzes the cis-trans isomerization of proline imidic peptide bonds in oligopeptides. Acts as a regulatory subunit for PP2A-like phosphatases modulating their activity or substrate specificity, probably by inducing a conformational change in the catalytic subunit, a direct target of the PPIase. Can reactivate inactive phosphatase PP2A-phosphatase methylesterase complexes (PP2Ai) in presence of ATP and Mg(2+) by dissociating the inactive form from the complex. The chain is Serine/threonine-protein phosphatase 2A activator 2 (RRD2) from Eremothecium gossypii (strain ATCC 10895 / CBS 109.51 / FGSC 9923 / NRRL Y-1056) (Yeast).